The following is a 275-amino-acid chain: Myoblast determination protein 1 homolog (275 aa).

The region spanning 84-135 (DRRKAATMRERRRLSKVNDAFETLKRCTSTNPNQRLPKVEILRNAISYIESL) is the bHLH domain. The disordered stretch occupies residues 234-275 (EGHEESPCSPHEGSVLSDTGTTAPSPTSCPQQQAQETIYQVL). The span at 249–275 (LSDTGTTAPSPTSCPQQQAQETIYQVL) shows a compositional bias: polar residues.

In terms of assembly, efficient DNA binding requires dimerization with another bHLH protein. As to expression, from mid-gastrula to just before somite formation, expressed in cells adjacent to axial mesoderm. Subsequently, during the anterior-to-posterior wave of somite formation and maturation, expressed within particular regions of each somite. Expressed in both muscle and non-muscle cells.

The protein resides in the nucleus. Functionally, may act as a transcriptional activator that promotes transcription of muscle-specific target genes and plays a role in muscle differentiation. This is Myoblast determination protein 1 homolog (myod1) from Danio rerio (Zebrafish).